The sequence spans 336 residues: Glyceraldehyde-3-phosphate dehydrogenase (336 aa).

NAD(+) contacts are provided by residues 12–13, D34, R78, and T121; that span reads RI. D-glyceraldehyde 3-phosphate is bound by residues 151–153, T182, R199, 212–213, and R235; these read SCT and TG. C152 (nucleophile) is an active-site residue. Residue N316 coordinates NAD(+).

This sequence belongs to the glyceraldehyde-3-phosphate dehydrogenase family. As to quaternary structure, homotetramer.

The protein resides in the cytoplasm. The catalysed reaction is D-glyceraldehyde 3-phosphate + phosphate + NAD(+) = (2R)-3-phospho-glyceroyl phosphate + NADH + H(+). It functions in the pathway carbohydrate degradation; glycolysis; pyruvate from D-glyceraldehyde 3-phosphate: step 1/5. Functionally, catalyzes the oxidative phosphorylation of glyceraldehyde 3-phosphate (G3P) to 1,3-bisphosphoglycerate (BPG) using the cofactor NAD. The first reaction step involves the formation of a hemiacetal intermediate between G3P and a cysteine residue, and this hemiacetal intermediate is then oxidized to a thioester, with concomitant reduction of NAD to NADH. The reduced NADH is then exchanged with the second NAD, and the thioester is attacked by a nucleophilic inorganic phosphate to produce BPG. In Streptococcus pyogenes serotype M1, this protein is Glyceraldehyde-3-phosphate dehydrogenase (gap).